The following is a 182-amino-acid chain: DOMON domain-containing protein Y73F4A.1 (182 aa).

The N-terminal stretch at 1-18 (MFVLAIVFAFVFIPSSSS) is a signal peptide. One can recognise a DOMON domain in the interval 26–143 (ELVSMNWNVK…CLNWMVVPGG (118 aa)). Residues Asn47 and Asn128 are each glycosylated (N-linked (GlcNAc...) asparagine).

The protein localises to the secreted. The protein is DOMON domain-containing protein Y73F4A.1 of Caenorhabditis elegans.